Consider the following 629-residue polypeptide: Dual specificity tyrosine-phosphorylation-regulated kinase 1B (629 aa).

A Phosphotyrosine modification is found at Tyr-63. Residues 67–86 form a disordered region; it reads KKRRAQQAPPQDSSTKKEKK. Positions 69 to 86 match the Bipartite nuclear localization signal motif; it reads RRAQQAPPQDSSTKKEKK. 2 positions are modified to phosphotyrosine: Tyr-92 and Tyr-111. In terms of domain architecture, Protein kinase spans 111–431; it reads YEIDSLIGKG…PLGALQHGFF (321 aa). 117–125 lines the ATP pocket; the sequence is IGKGSFGQV. Tyr-129 carries the phosphotyrosine modification. An ATP-binding site is contributed by Lys-140. Tyr-171 carries the phosphotyrosine modification. Position 190–193 (190–193) interacts with ATP; it reads FELL. Asp-239 functions as the Proton acceptor in the catalytic mechanism. Ser-262 is modified (phosphoserine). Tyr-271 carries the post-translational modification Phosphotyrosine; by autocatalysis. Tyr-273 carries the post-translational modification Phosphotyrosine. The disordered stretch occupies residues 380–399; sequence GVQTGGPGGRRAGEPGHSPA. Tyr-401 is subject to Phosphotyrosine. Disordered regions lie at residues 436–480 and 496–629; these read DEAT…SNDN and PITD…AASS. The span at 438-477 shows a compositional bias: low complexity; sequence ATNTGPAGSSASTSPAPLDTCPSSSTASSISSSGGSSGSS. The segment at 480–520 is interaction with RANBP9; the sequence is NRAYRYSNRYCGGPGPPITDCEMNSPQVLPSQPLRPWAGGD. Composition is skewed to pro residues over residues 552 to 562 and 574 to 585; these read PPSPTSPPPPE and DCSPPPPAPAPQ. Phosphoserine is present on Ser-624.

The protein belongs to the protein kinase superfamily. CMGC Ser/Thr protein kinase family. MNB/DYRK subfamily. In terms of assembly, dimer. Interacts with DCOHM, MAP2K3/MKK3, RANBP9 and TCF1/HNF1A. Part of a complex consisting of RANBP9, RAN, DYRK1B and COPS5. Interacts with DCAF7. Interacts with RNF169. Phosphorylated by MAP kinase. Tyrosine phosphorylation may be required for dimerization. As to expression, isoform 1 and isoform 2 are broadly expressed. Isoform 3 seems specific for skeletal muscle (at protein level).

It localises to the nucleus. The protein localises to the nucleolus. The protein resides in the chromosome. The enzyme catalyses L-seryl-[protein] + ATP = O-phospho-L-seryl-[protein] + ADP + H(+). It carries out the reaction L-threonyl-[protein] + ATP = O-phospho-L-threonyl-[protein] + ADP + H(+). It catalyses the reaction L-tyrosyl-[protein] + ATP = O-phospho-L-tyrosyl-[protein] + ADP + H(+). With respect to regulation, inhibited by RANBP9. In terms of biological role, dual-specificity kinase which possesses both serine/threonine and tyrosine kinase activities. Plays an essential role in ribosomal DNA (rDNA) double-strand break repair and rDNA copy number maintenance. During DNA damage, mediates transcription silencing in part via phosphorylating and enforcing DSB accumulation of the histone methyltransferase EHMT2. Enhances the transcriptional activity of TCF1/HNF1A and FOXO1. Inhibits epithelial cell migration. Mediates colon carcinoma cell survival in mitogen-poor environments. Inhibits the SHH and WNT1 pathways, thereby enhancing adipogenesis. In addition, promotes expression of the gluconeogenic enzyme glucose-6-phosphatase catalytic subunit 1 (G6PC1). The protein is Dual specificity tyrosine-phosphorylation-regulated kinase 1B (Dyrk1b) of Mus musculus (Mouse).